Reading from the N-terminus, the 184-residue chain is uncharacterized protein (184 aa).

A signal peptide spans 1 to 20; the sequence is MKKQILALVCGVIFSSSTWA.

It to E.coli YtfJ.

It localises to the periplasm. This is an uncharacterized protein from Haemophilus influenzae (strain ATCC 51907 / DSM 11121 / KW20 / Rd).